Here is a 309-residue protein sequence, read N- to C-terminus: Porphobilinogen deaminase (309 aa).

C241 carries the post-translational modification S-(dipyrrolylmethanemethyl)cysteine.

This sequence belongs to the HMBS family. In terms of assembly, monomer. Requires dipyrromethane as cofactor.

It carries out the reaction 4 porphobilinogen + H2O = hydroxymethylbilane + 4 NH4(+). Its pathway is porphyrin-containing compound metabolism; protoporphyrin-IX biosynthesis; coproporphyrinogen-III from 5-aminolevulinate: step 2/4. Tetrapolymerization of the monopyrrole PBG into the hydroxymethylbilane pre-uroporphyrinogen in several discrete steps. The chain is Porphobilinogen deaminase from Desulforamulus reducens (strain ATCC BAA-1160 / DSM 100696 / MI-1) (Desulfotomaculum reducens).